Here is a 369-residue protein sequence, read N- to C-terminus: Tetraacyldisaccharide 4'-kinase (369 aa).

An ATP-binding site is contributed by 52 to 59; it reads TVGGTGKT.

Belongs to the LpxK family.

It catalyses the reaction a lipid A disaccharide + ATP = a lipid IVA + ADP + H(+). The protein operates within glycolipid biosynthesis; lipid IV(A) biosynthesis; lipid IV(A) from (3R)-3-hydroxytetradecanoyl-[acyl-carrier-protein] and UDP-N-acetyl-alpha-D-glucosamine: step 6/6. In terms of biological role, transfers the gamma-phosphate of ATP to the 4'-position of a tetraacyldisaccharide 1-phosphate intermediate (termed DS-1-P) to form tetraacyldisaccharide 1,4'-bis-phosphate (lipid IVA). The protein is Tetraacyldisaccharide 4'-kinase of Parabacteroides distasonis (strain ATCC 8503 / DSM 20701 / CIP 104284 / JCM 5825 / NCTC 11152).